The primary structure comprises 297 residues: MDIVTGSTTALITPFKNGKLDESAYANLIKRQINNGINAVCPVGTTGESATLSYAEDKRCIEIAVEICRGTATKVLAGAGSNSTSEAIEAAITAQKCGVDAIFSVAPYYVKPSQEGLYQHYKAIAESVSDMPFMLYNVPGRTVVDISADTVIRLFDDVKNIYGIKEATGSLERTVELLSRRPELKVFSGDDAIDYPILANGGAGITSVTSNLLPDLKSELVKKALNGDFTGSKAINDMLFPINKALFIESNPIMIKAAMYIAGLIDTLEYRLPLVAPSVENMKKIESVMKNYEIKGL.

T46 lines the pyruvate pocket. The active-site Proton donor/acceptor is Y136. Residue K165 is the Schiff-base intermediate with substrate of the active site. A pyruvate-binding site is contributed by T206.

Belongs to the DapA family. In terms of assembly, homotetramer; dimer of dimers.

Its subcellular location is the cytoplasm. The catalysed reaction is L-aspartate 4-semialdehyde + pyruvate = (2S,4S)-4-hydroxy-2,3,4,5-tetrahydrodipicolinate + H2O + H(+). The protein operates within amino-acid biosynthesis; L-lysine biosynthesis via DAP pathway; (S)-tetrahydrodipicolinate from L-aspartate: step 3/4. Catalyzes the condensation of (S)-aspartate-beta-semialdehyde [(S)-ASA] and pyruvate to 4-hydroxy-tetrahydrodipicolinate (HTPA). The sequence is that of 4-hydroxy-tetrahydrodipicolinate synthase from Sulfurimonas denitrificans (strain ATCC 33889 / DSM 1251) (Thiomicrospira denitrificans (strain ATCC 33889 / DSM 1251)).